The primary structure comprises 70 residues: uncharacterized protein (70 aa).

Positions 5 to 59 constitute an HTH cro/C1-type domain; the sequence is IREFRAKYGMTQEELAKKVGVRRETIVFLEKGKYNPSLRLAYKIARVFNARIEDL. Positions 16 to 35 form a DNA-binding region, H-T-H motif; that stretch reads QEELAKKVGVRRETIVFLEK.

This is an uncharacterized protein from Archaeoglobus fulgidus (strain ATCC 49558 / DSM 4304 / JCM 9628 / NBRC 100126 / VC-16).